The sequence spans 908 residues: Adhesion G-protein coupled receptor F1 (908 aa).

An N-terminal signal peptide occupies residues 1–20 (MRIGLLWLVPLFTLTEGTDG). Residues 21 to 588 (FLQQKNDGRR…VVPVVKWITY (568 aa)) lie on the Extracellular side of the membrane. 12 N-linked (GlcNAc...) asparagine glycosylation sites follow: N133, N167, N328, N353, N367, N388, N422, N453, N510, N519, N526, and N551. The region spanning 147–255 (ERAKVWGTFE…GSFRVFGKAP (109 aa)) is the SEA domain. The GAIN-B domain maps to 434–577 (PVTQIQSTRG…SMLMSPFVPS (144 aa)). Disulfide bonds link C532–C559 and C547–C561. The tract at residues 532–577 (CVFWDFSQLQWSNAGCQLVNETLDTVLCRCSHLTSFSMLMSPFVPS) is GPS. The tract at residues 566–574 (SFSMLMSPF) is stachel. A helical membrane pass occupies residues 589–609 (IGLSISIASLILCLIIESLFW). Over 610–622 (KQTKRSQTSYTRN) the chain is Cytoplasmic. A helical membrane pass occupies residues 623–643 (ICLVNIAVSLLIADVWFIIAA). Residues 644–658 (TVDPSVSPSGVCVAA) lie on the Extracellular side of the membrane. Residues C655 and C731 are joined by a disulfide bond. A helical transmembrane segment spans residues 659-679 (VFFTHFFYLAVFFWMLVLGIL). Residues 680 to 697 (LAYRIILVFHHMALTTMM) are Cytoplasmic-facing. Residues 698-718 (AIGFCLGYGCPLLISIITLAV) form a helical membrane-spanning segment. Residues 719 to 742 (TQPSNSYKRNDVCWLNWSDKSKPL) lie on the Extracellular side of the membrane. Residue N734 is glycosylated (N-linked (GlcNAc...) asparagine). Residues 743–763 (LAFVVPALTIVAVNLVVVLLV) form a helical membrane-spanning segment. At 764–789 (LRKLWRPAVGERLNQDDKATAIRMGK) the chain is on the cytoplasmic side. The chain crosses the membrane as a helical span at residues 790-810 (SLLVLTPLLGLTWGFGIGTMA). The Extracellular segment spans residues 811-818 (NSHNLAWH). The chain crosses the membrane as a helical span at residues 819–839 (VLFALLNAFQGFFIFCFGILL). Residues 840–908 (DTKLRQLLSN…ITLTQFLSTE (69 aa)) lie on the Cytoplasmic side of the membrane.

Belongs to the G-protein coupled receptor 2 family. Adhesion G-protein coupled receptor (ADGR) subfamily. Heterodimer of 2 chains generated by proteolytic processing; the large extracellular N-terminal fragment and the membrane-bound C-terminal fragment predominantly remain associated and non-covalently linked. Autoproteolytically processed at the GPS region of the GAIN-B domain; this cleavage modulates receptor activity. Expressed in liver, kidney and adrenal gland. In kidney strong expression in the renal pelvis and the ureter.

Its subcellular location is the cell membrane. With respect to regulation, forms a heterodimer of 2 chains generated by proteolytic processing that remain associated through non-covalent interactions mediated by the GAIN-B domain. In the inactivated receptor, the Stachel sequence (also named stalk) is embedded in the GAIN-B domain, where it adopts a beta-strand conformation. On activation, the Stachel moves into the 7 transmembrane region and adopts a twisted hook-shaped configuration that forms contacts within the receptor, leading to coupling of a G-alpha protein, which activates signaling. The cleaved GAIN-B and N-terminal domains can then dissociate from the rest of the receptor. In terms of biological role, adhesion G-protein coupled receptor (aGPCR) for N-docosahexaenoylethanolamine (synaptamide), an omega-3 fatty acid lipid highly enriched in the brain. Ligand binding causes a conformation change that triggers signaling via guanine nucleotide-binding proteins (G proteins) and modulates the activity of downstream effectors, such as adenylate cyclase. ADGRF1 is coupled to G(s) G proteins and mediates activation of adenylate cyclase activity. Also able to couple to G(q), G(i) and G(12)/G(13) G proteins; additional evidence is however required to confirm this result in vivo. Involved in the development of neurons and cognitive function. In liver, involved in fat accumulation. This Mus musculus (Mouse) protein is Adhesion G-protein coupled receptor F1.